The following is a 254-amino-acid chain: 4-hydroxy-tetrahydrodipicolinate reductase (254 aa).

7 to 12 (GASGRI) is a binding site for NAD(+). Arg35 serves as a coordination point for NADP(+). NAD(+)-binding positions include 91–93 (GTT) and 115–118 (AHNM). Catalysis depends on His147, which acts as the Proton donor/acceptor. His148 contacts (S)-2,3,4,5-tetrahydrodipicolinate. The Proton donor role is filled by Lys151. Residue 157 to 158 (GT) coordinates (S)-2,3,4,5-tetrahydrodipicolinate.

The protein belongs to the DapB family.

The protein localises to the cytoplasm. It carries out the reaction (S)-2,3,4,5-tetrahydrodipicolinate + NAD(+) + H2O = (2S,4S)-4-hydroxy-2,3,4,5-tetrahydrodipicolinate + NADH + H(+). The catalysed reaction is (S)-2,3,4,5-tetrahydrodipicolinate + NADP(+) + H2O = (2S,4S)-4-hydroxy-2,3,4,5-tetrahydrodipicolinate + NADPH + H(+). It participates in amino-acid biosynthesis; L-lysine biosynthesis via DAP pathway; (S)-tetrahydrodipicolinate from L-aspartate: step 4/4. Functionally, catalyzes the conversion of 4-hydroxy-tetrahydrodipicolinate (HTPA) to tetrahydrodipicolinate. This Helicobacter pylori (strain P12) protein is 4-hydroxy-tetrahydrodipicolinate reductase.